The following is a 265-amino-acid chain: Arcelin-2 (265 aa).

Residues methionine 1–serine 21 form the signal peptide. Residues asparagine 33 and asparagine 89 are each glycosylated (N-linked (GlcNAc...) asparagine). An intrachain disulfide couples cysteine 165 to cysteine 201.

Belongs to the leguminous lectin family.

Its function is as follows. Seed storage. This carbohydrate-binding lectin has toxic effects on bean bruchid pests. Antibiosis properties of legume lectins are proposed to be due to the lysis of epithelial cells of the intestine by binding to the carbohydrate moieties of these proteins. The polypeptide is Arcelin-2 (ARC2) (Phaseolus vulgaris (Kidney bean)).